Consider the following 596-residue polypeptide: NADH-quinone oxidoreductase subunit C/D (596 aa).

The interval 1 to 186 is NADH dehydrogenase I subunit C; the sequence is MTDLTAQDAA…DPFELTKAKQ (186 aa). The segment at 210-596 is NADH dehydrogenase I subunit D; the sequence is DFMFLNLGPN…IDFVMSDVDR (387 aa).

The protein in the N-terminal section; belongs to the complex I 30 kDa subunit family. In the C-terminal section; belongs to the complex I 49 kDa subunit family. As to quaternary structure, NDH-1 is composed of 13 different subunits. Subunits NuoB, CD, E, F, and G constitute the peripheral sector of the complex.

Its subcellular location is the cell inner membrane. It catalyses the reaction a quinone + NADH + 5 H(+)(in) = a quinol + NAD(+) + 4 H(+)(out). Its function is as follows. NDH-1 shuttles electrons from NADH, via FMN and iron-sulfur (Fe-S) centers, to quinones in the respiratory chain. The immediate electron acceptor for the enzyme in this species is believed to be ubiquinone. Couples the redox reaction to proton translocation (for every two electrons transferred, four hydrogen ions are translocated across the cytoplasmic membrane), and thus conserves the redox energy in a proton gradient. This is NADH-quinone oxidoreductase subunit C/D from Salmonella dublin (strain CT_02021853).